The primary structure comprises 68 residues: Large ribosomal subunit protein uL29 (68 aa).

Belongs to the universal ribosomal protein uL29 family.

The sequence is that of Large ribosomal subunit protein uL29 from Streptococcus gordonii (strain Challis / ATCC 35105 / BCRC 15272 / CH1 / DL1 / V288).